The following is a 324-amino-acid chain: Glyoxylate/hydroxypyruvate reductase B (324 aa).

Residues Arg-237 and Glu-266 contribute to the active site. His-285 (proton donor) is an active-site residue.

The protein belongs to the D-isomer specific 2-hydroxyacid dehydrogenase family. GhrB subfamily. As to quaternary structure, homodimer.

It localises to the cytoplasm. It catalyses the reaction glycolate + NADP(+) = glyoxylate + NADPH + H(+). The catalysed reaction is (R)-glycerate + NAD(+) = 3-hydroxypyruvate + NADH + H(+). The enzyme catalyses (R)-glycerate + NADP(+) = 3-hydroxypyruvate + NADPH + H(+). Its function is as follows. Catalyzes the NADPH-dependent reduction of glyoxylate and hydroxypyruvate into glycolate and glycerate, respectively. The chain is Glyoxylate/hydroxypyruvate reductase B from Salmonella heidelberg (strain SL476).